Here is an 895-residue protein sequence, read N- to C-terminus: Isoleucine--tRNA ligase (895 aa).

Positions 57-67 match the 'HIGH' region motif; sequence PYANGSIHVGH. An L-isoleucyl-5'-AMP-binding site is contributed by Glu-549. Positions 590 to 594 match the 'KMSKS' region motif; sequence KMSKS. Lys-593 is an ATP binding site. Positions 869, 872, 888, and 891 each coordinate Zn(2+).

The protein belongs to the class-I aminoacyl-tRNA synthetase family. IleS type 1 subfamily. Monomer. It depends on Zn(2+) as a cofactor.

The protein resides in the cytoplasm. It carries out the reaction tRNA(Ile) + L-isoleucine + ATP = L-isoleucyl-tRNA(Ile) + AMP + diphosphate. Catalyzes the attachment of isoleucine to tRNA(Ile). As IleRS can inadvertently accommodate and process structurally similar amino acids such as valine, to avoid such errors it has two additional distinct tRNA(Ile)-dependent editing activities. One activity is designated as 'pretransfer' editing and involves the hydrolysis of activated Val-AMP. The other activity is designated 'posttransfer' editing and involves deacylation of mischarged Val-tRNA(Ile). The polypeptide is Isoleucine--tRNA ligase (Mycoplasma genitalium (strain ATCC 33530 / DSM 19775 / NCTC 10195 / G37) (Mycoplasmoides genitalium)).